A 368-amino-acid polypeptide reads, in one-letter code: Ferrochelatase (368 aa).

Residues His-209 and Glu-290 each coordinate Fe cation. A disordered region spans residues 341 to 368 (ADLGGGREATGQAAERSRQRALALGAKQ).

Belongs to the ferrochelatase family.

Its subcellular location is the cytoplasm. It catalyses the reaction heme b + 2 H(+) = protoporphyrin IX + Fe(2+). It participates in porphyrin-containing compound metabolism; protoheme biosynthesis; protoheme from protoporphyrin-IX: step 1/1. Catalyzes the ferrous insertion into protoporphyrin IX. The chain is Ferrochelatase from Nitrosococcus oceani (strain ATCC 19707 / BCRC 17464 / JCM 30415 / NCIMB 11848 / C-107).